We begin with the raw amino-acid sequence, 394 residues long: NAD(P)H-quinone oxidoreductase subunit H (394 aa).

The protein belongs to the complex I 49 kDa subunit family. In terms of assembly, NDH-1 can be composed of about 15 different subunits; different subcomplexes with different compositions have been identified which probably have different functions.

The protein resides in the cellular thylakoid membrane. The enzyme catalyses a plastoquinone + NADH + (n+1) H(+)(in) = a plastoquinol + NAD(+) + n H(+)(out). It carries out the reaction a plastoquinone + NADPH + (n+1) H(+)(in) = a plastoquinol + NADP(+) + n H(+)(out). In terms of biological role, NDH-1 shuttles electrons from an unknown electron donor, via FMN and iron-sulfur (Fe-S) centers, to quinones in the respiratory and/or the photosynthetic chain. The immediate electron acceptor for the enzyme in this species is believed to be plastoquinone. Couples the redox reaction to proton translocation, and thus conserves the redox energy in a proton gradient. Cyanobacterial NDH-1 also plays a role in inorganic carbon-concentration. The chain is NAD(P)H-quinone oxidoreductase subunit H from Prochlorococcus marinus (strain NATL2A).